Reading from the N-terminus, the 234-residue chain is uncharacterized protein (234 aa).

Positions 62-99 are disordered; sequence NEESISDLNSDNPGNSEPSDVESFVLSDEDENSEKDFS. Over residues 67–79 the composition is skewed to polar residues; that stretch reads SDLNSDNPGNSEP.

This is an uncharacterized protein from Acanthamoeba polyphaga (Amoeba).